The chain runs to 251 residues: uncharacterized protein (251 aa).

It belongs to the FAM243 family.

This is an uncharacterized protein from Bos taurus (Bovine).